The following is a 567-amino-acid chain: Zinc finger protein 512 (567 aa).

The disordered stretch occupies residues 1–32; that stretch reads MSSRLGAVPATSGPTTFKQQRSTRIVGAKNSR. Residues 12–23 show a composition bias toward polar residues; the sequence is SGPTTFKQQRST. Glycyl lysine isopeptide (Lys-Gly) (interchain with G-Cter in SUMO2) cross-links involve residues Lys-18 and Lys-84. The interval 86-148 is disordered; it reads AATSHVEGSG…QARRIRKEPP (63 aa). Residues 119 to 130 show a composition bias toward basic residues; sequence KKHKLYGRKQRP. The C2H2-type 1 zinc-finger motif lies at 197-220; sequence FTCHHCGKQLRSLAGMKYHVMANH. Lys-227 participates in a covalent cross-link: Glycyl lysine isopeptide (Lys-Gly) (interchain with G-Cter in SUMO2). The C2H2-type 2 zinc finger occupies 287 to 310; that stretch reads LKCHHCGKPYRSKAGLAYHLRSEH. A Glycyl lysine isopeptide (Lys-Gly) (interchain with G-Cter in SUMO2) cross-link involves residue Lys-333. The segment at 406–430 adopts a C2H2-type 3; atypical zinc-finger fold; it reads IQCPNQGCEAVYSSVSGLKAHLGSC. The segment at 440–463 adopts a C2H2-type 4 zinc-finger fold; sequence YKCLLCQKEFVSESGVKYHINSVH. The segment at 486-567 is disordered; sequence QRQQEEEKRR…PKTNHKRGRK (82 aa). The span at 495–508 shows a compositional bias: basic residues; it reads RQQHRSRRSLRRRQ. Basic and acidic residues predominate over residues 523-532; it reads VGKDQRRNNE. Over residues 556 to 567 the composition is skewed to basic residues; it reads KPPKTNHKRGRK.

It belongs to the krueppel C2H2-type zinc-finger protein family.

It localises to the nucleus. Its function is as follows. May be involved in transcriptional regulation. This is Zinc finger protein 512 (ZNF512) from Homo sapiens (Human).